The chain runs to 122 residues: uncharacterized protein (122 aa).

A compositionally biased stretch (polar residues) spans 79-90; it reads NERVTSRVTNSR. The segment at 79 to 122 is disordered; the sequence is NERVTSRVTNSRTESESNGNGNATGNTSSNANSNGNANGIYIRK. Over residues 94–122 the composition is skewed to low complexity; that stretch reads ESNGNGNATGNTSSNANSNGNANGIYIRK.

This is an uncharacterized protein from Leptolyngbya boryana (Plectonema boryanum).